A 558-amino-acid polypeptide reads, in one-letter code: D-xylose-proton symporter-like 3, chloroplastic (558 aa).

The transit peptide at Met1–Ser31 directs the protein to the chloroplast. 12 helical membrane-spanning segments follow: residues Val98 to Ala118, Leu146 to Ala166, Leu175 to Leu195, Ile197 to Pro217, Leu238 to Val258, Met264 to Ala284, Ala359 to Leu379, Val400 to Asp420, Pro426 to Tyr446, Leu449 to Ile469, Gly491 to Ser511, and Leu522 to Pro542.

It belongs to the major facilitator superfamily. Sugar transporter (TC 2.A.1.1) family.

Its subcellular location is the plastid. It is found in the chloroplast membrane. This chain is D-xylose-proton symporter-like 3, chloroplastic, found in Arabidopsis thaliana (Mouse-ear cress).